The primary structure comprises 168 residues: Plasma membrane-associated cation-binding protein 2 (168 aa).

Residue Gly2 is the site of N-myristoyl glycine attachment. Repeat copies occupy residues Val26–Lys30, Val69–Lys73, Val94–Lys99, Val103–Lys107, Val110–Lys115, Val118–Lys122, and Val124–Lys129. The tract at residues Val26–Lys129 is 7 X 5 AA approximate repeats of V-E-E-K-K. Residues Glu56–Lys77 are a coiled coil. Positions Glu88–Val131 are enriched in basic and acidic residues. The segment at Glu88–Ala168 is disordered. Residues Glu152–Ala168 are compositionally biased toward low complexity.

This sequence belongs to the DREPP family. As to quaternary structure, binds microtubules. Interacts with calcium ion Ca(2+), calmodulin and some phosphatidylinositol phosphates (PtdInsPs) such as phosphatidylinositol 3,5-bisphosphate [PtdIns(3,5)P(2)], PtdIns(4,5)P(2) and PtdIns(3,4,5)P(3). Cu(2+) is required as a cofactor. As to expression, mostly expressed in the expanding cells, specifically in roots (except in root tips) and flowers (at protein level). Also detected in cotyledons, hypocotyls and trichome stalks.

It is found in the cell membrane. It localises to the cytoplasm. The protein localises to the cytoskeleton. Its function is as follows. May be involved in intracellular signaling through interaction with PtdInsPs and calmodulin (CaM); may keep PtdInsPs attached to the plasma membrane until Ca(2+)-CaM reaches a competitive concentration subsequent to an increase triggered by a stimulus, thus leading to PtdInsPs release and subsequent activation of InsPs-dependent signaling cascade. Binds to microtubules and inhibits tubulin polymerization. Regulates directional cell growth and cortical microtubule organization by destabilizing microtubules (e.g. in cotyledon pavement cells). This chain is Plasma membrane-associated cation-binding protein 2, found in Arabidopsis thaliana (Mouse-ear cress).